A 208-amino-acid polypeptide reads, in one-letter code: Thymidylate kinase (208 aa).

Residue 10-17 coordinates ATP; that stretch reads GPEGSGKT.

This sequence belongs to the thymidylate kinase family.

The enzyme catalyses dTMP + ATP = dTDP + ADP. Its function is as follows. Phosphorylation of dTMP to form dTDP in both de novo and salvage pathways of dTTP synthesis. The protein is Thymidylate kinase of Bacillus cereus (strain ATCC 14579 / DSM 31 / CCUG 7414 / JCM 2152 / NBRC 15305 / NCIMB 9373 / NCTC 2599 / NRRL B-3711).